The primary structure comprises 1088 residues: Serine/threonine-protein kinase 11-interacting protein (1088 aa).

LRR repeat units lie at residues 109-130 (SLRH…RGIY), 132-152 (QLET…LSAC), 164-185 (ALLS…LRLL), 187-209 (ALRF…MDLC), 210-231 (ELHH…GPSG), 233-254 (ALGV…EQLR), 255-276 (NLRH…SPLW), and 280-301 (ELRK…RAAT). Disordered stretches follow at residues 335–407 (GLSP…SPAG) and 437–533 (LEPS…QKEV). Residues 346–367 (PVGSTPETSGGPDLSDSLSSGG) show a composition bias toward low complexity. The segment covering 375–385 (HKVKSRVRVRR) has biased composition (basic residues). Residues Ser-387, Ser-389, and Ser-392 each carry the phosphoserine modification. Over residues 447–460 (TPTTSAPSAPPASS) the composition is skewed to low complexity. A Phosphoserine modification is found at Ser-470. Residues 508–529 (EEGEMVEQGEEEAGEEEEEEQD) show a composition bias toward acidic residues. Position 599 is a phosphoserine (Ser-599). Disordered regions lie at residues 724–780 (TPNR…SPPP) and 978–1009 (DAAG…PAVR). Residues 733 to 742 (EQSLAPSPSA) are compositionally biased toward polar residues. Residues 750–759 (GHGDHLDRAK) are compositionally biased toward basic and acidic residues. Phosphoserine is present on residues Ser-761, Ser-773, and Ser-777. Over residues 978–994 (DAAGSPAEPSPPAASGE) the composition is skewed to low complexity.

This sequence belongs to the STK11IP family. In terms of assembly, found in a ternary complex composed of STK11/LKB1, STK11IP and SMAD4. Interacts with STK11/LKB1 and SMAD4.

Its subcellular location is the cytoplasm. May regulate STK11/LKB1 function by controlling its subcellular localization. This is Serine/threonine-protein kinase 11-interacting protein (STK11IP) from Homo sapiens (Human).